The primary structure comprises 98 residues: Small ribosomal subunit protein bS6 (98 aa).

Belongs to the bacterial ribosomal protein bS6 family.

Binds together with bS18 to 16S ribosomal RNA. This Staphylococcus haemolyticus (strain JCSC1435) protein is Small ribosomal subunit protein bS6.